The sequence spans 350 residues: Heat-inducible transcription repressor HrcA (350 aa).

The protein belongs to the HrcA family.

Functionally, negative regulator of class I heat shock genes (grpE-dnaK-dnaJ and groELS operons). Prevents heat-shock induction of these operons. In Xanthomonas oryzae pv. oryzae (strain KACC10331 / KXO85), this protein is Heat-inducible transcription repressor HrcA.